The sequence spans 275 residues: Large ribosomal subunit protein uL2 (275 aa).

The disordered stretch occupies residues 236-263 (EGRGKGQHPVTPWGMPTKGYKTRRGRRA).

Belongs to the universal ribosomal protein uL2 family. As to quaternary structure, part of the 50S ribosomal subunit. Forms a bridge to the 30S subunit in the 70S ribosome.

In terms of biological role, one of the primary rRNA binding proteins. Required for association of the 30S and 50S subunits to form the 70S ribosome, for tRNA binding and peptide bond formation. It has been suggested to have peptidyltransferase activity; this is somewhat controversial. Makes several contacts with the 16S rRNA in the 70S ribosome. This is Large ribosomal subunit protein uL2 from Pseudothermotoga lettingae (strain ATCC BAA-301 / DSM 14385 / NBRC 107922 / TMO) (Thermotoga lettingae).